Consider the following 57-residue polypeptide: Sec-independent protein translocase protein TatA (57 aa).

A helical membrane pass occupies residues 1–21 (MGISVWQLLIILLIVVMLFGT). Positions 37–57 (GFRKSVSDGETTTQAEASSRS) are disordered. Residues 44-57 (DGETTTQAEASSRS) show a composition bias toward polar residues.

Belongs to the TatA/E family. As to quaternary structure, the Tat system comprises two distinct complexes: a TatABC complex, containing multiple copies of TatA, TatB and TatC subunits, and a separate TatA complex, containing only TatA subunits. Substrates initially bind to the TatABC complex, which probably triggers association of the separate TatA complex to form the active translocon.

The protein localises to the cell inner membrane. Its function is as follows. Part of the twin-arginine translocation (Tat) system that transports large folded proteins containing a characteristic twin-arginine motif in their signal peptide across membranes. TatA could form the protein-conducting channel of the Tat system. This is Sec-independent protein translocase protein TatA from Stutzerimonas stutzeri (Pseudomonas stutzeri).